Consider the following 266-residue polypeptide: Adaptin ear-binding coat-associated protein 2 (266 aa).

Disordered stretches follow at residues 164-191 and 244-266; these read SMKK…LPPP and GDFT…WVQF. Residue S181 is modified to Phosphoserine. The short motif at 243-246 is the WXXF motif 1 element; the sequence is WGDF. Residues 247–258 are compositionally biased toward low complexity; sequence TKSTGSTSSQTQ. The short motif at 263 to 266 is the WXXF motif 2 element; sequence WVQF.

It belongs to the NECAP family. In terms of assembly, interacts with AP1G1 and AP2A1 components of the adapter protein complexes AP-1 and AP-2. Interacts with the GAE domain proteins GGA1, GGA2 and GGA3.

The protein resides in the cytoplasmic vesicle. The protein localises to the clathrin-coated vesicle membrane. Its subcellular location is the cell membrane. Involved in endocytosis. This chain is Adaptin ear-binding coat-associated protein 2 (NECAP2), found in Bos taurus (Bovine).